A 589-amino-acid chain; its full sequence is MPTVSVKRDLLFQALGRTYTDEEFDELCFEFGLELDEITSEKEIISKEQGNVKAAGASDVVLYKIDVPANRYDLLCLEGLVRGLQVFKERIKAPVYKRVMPDGKIQKLIITEETAKIRPFAVAAVLRNIKFTKDRYDSFIELQEKLHQNICRKRALVAIGTHDLDTLSGPFTYTAKRPSDIKFKPLNKTKEYTACELMNIYKTDNHLKHYLHIIENKPLYPVIYDSNGVVLSMPPIINGDHSRITVNTRNIFIECTGTDFTKAKIVLDIIVTMFSEYCENQFTVEAAEVVFPNGKSHTFPELAYRKEMVRADLINKKVGIRETPENLAKLLTRMYLKSEVIGDGNQIEIEIPPTRADIIHACDIVEDAAIAYGYNNIQMTLPKTYTIANQFPLNKLTELLRHDMAAAGFTEALTFALCSQEDIADKLGVDISATKAVHISNPKTAEFQVARTTLLPGLLKTIAANRKMPLPLKLFEISDIVIKDSNTDVGAKNYRHLCAVYYNKNPGFEIIHGLLDRIMQLLDVPPGEDKGGYVIKASEGPAFFPGRCAEIFARGQSVGKLGVLHPDVITKFELTMPCSSLEINVGPFL.

Positions 302–379 (LAYRKEMVRA…IAYGYNNIQM (78 aa)) constitute a B5 domain. Residues Asp-357, Asp-363, Glu-366, and Asp-367 each coordinate Mg(2+).

The protein belongs to the phenylalanyl-tRNA synthetase beta subunit family. Type 2 subfamily. Heterotetramer; dimer of two heterodimers formed by FARSA and FARSB. The cofactor is Mg(2+).

It localises to the cytoplasm. It catalyses the reaction tRNA(Phe) + L-phenylalanine + ATP = L-phenylalanyl-tRNA(Phe) + AMP + diphosphate + H(+). The sequence is that of Phenylalanine--tRNA ligase beta subunit (FARSB) from Homo sapiens (Human).